A 100-amino-acid polypeptide reads, in one-letter code: Cytochrome c2 iso-1 (100 aa).

Positions 11, 14, 15, and 76 each coordinate heme c.

The protein belongs to the cytochrome c family. Post-translationally, binds 1 heme c group covalently per subunit.

Functionally, cytochrome c2 is found mainly in purple, non-sulfur, photosynthetic bacteria where it functions as the electron donor to the oxidized bacteriochlorophyll in the photophosphorylation pathway. However, it may also have a role in the respiratory chain and is found in some non-photosynthetic bacteria. The protein is Cytochrome c2 iso-1 of Magnetospirillum molischianum (Rhodospirillum molischianum).